The chain runs to 67 residues: MMFRLTSVSCFLLVIACLNLFQVVLTSRCFPPGIYCTPYLPCCWGICCDTCRNVCHLRIGKRATFQE.

The signal sequence occupies residues 1 to 26 (MMFRLTSVSCFLLVIACLNLFQVVLT). Intrachain disulfides connect C29–C43, C36–C48, C42–C51, and C47–C55. At I59 the chain carries Isoleucine amide. Residues 63-67 (ATFQE) constitute a propeptide that is removed on maturation.

The protein belongs to the conotoxin I2 superfamily. As to expression, expressed by the venom duct.

It localises to the secreted. Inhibits the vertebrate voltage-gated potassium channels Kv1.1/KCNA1 and Kv1.3/KCNA3. The sequence is that of Kappa-conotoxin-like 1 from Conus vexillum (Flag cone).